We begin with the raw amino-acid sequence, 279 residues long: Lacto-N-neotetraose biosynthesis glycosyltransferase LgtB (279 aa).

It belongs to the glycosyltransferase 25 family.

It functions in the pathway glycan metabolism; lacto-N-neotetraose biosynthesis. It participates in bacterial outer membrane biogenesis; lipooligosaccharide biosynthesis. In terms of biological role, adds the second galactose to the lacto-N-tetraose chain in lipooligosaccharide (LOS). This is Lacto-N-neotetraose biosynthesis glycosyltransferase LgtB (lgtB) from Neisseria meningitidis serogroup A / serotype 4A (strain DSM 15465 / Z2491).